Consider the following 419-residue polypeptide: D(4) dopamine receptor (419 aa).

At 1-29 (MGNRSTADADGLLAGRGPAAGASAGASAG) the chain is on the extracellular side. A glycan (N-linked (GlcNAc...) asparagine) is linked at asparagine 3. The helical transmembrane segment at 30 to 50 (LAGQGAAALVGGVLLIGAVLA) threads the bilayer. Over 51-71 (GNSLVCVSVATERALQTPTNS) the chain is Cytoplasmic. The chain crosses the membrane as a helical span at residues 72–92 (FIVSLAAADLLLALLVLPLFV). Position 80 (aspartate 80) interacts with Na(+). Residues 93 to 110 (YSEVQGGAWLLSPRLCDA) lie on the Extracellular side of the membrane. Cysteine 108 and cysteine 185 are disulfide-bonded. The chain crosses the membrane as a helical span at residues 111 to 131 (LMAMDVMLCTASIFNLCAISV). Aspartate 115 lines the (2R,3R)-nemonapride pocket. Position 122 (serine 122) interacts with Na(+). The Cytoplasmic portion of the chain corresponds to 132 to 152 (DRFVAVAVPLRYNRQGGSRRQ). The helical transmembrane segment at 153–173 (LLLIGATWLLSAAVAAPVLCG) threads the bilayer. Residues 174-192 (LNDVRGRDPAVCRLEDRDY) are Extracellular-facing. The chain crosses the membrane as a helical span at residues 193–213 (VVYSSVCSFFLPCPLMLLLYW). Serine 196 provides a ligand contact to (2R,3R)-nemonapride. Residues 214 to 346 (ATFRGLQRWE…ITGRERKAMR (133 aa)) lie on the Cytoplasmic side of the membrane. The interval 230-264 (LHGRAPRRPSGPGPPSPTPPAPRLPQDPCGPDCAP) is disordered. Residues 238–254 (PSGPGPPSPTPPAPRLP) show a composition bias toward pro residues. The 1; approximate repeat unit spans residues 249-264 (PAPRLPQDPCGPDCAP). The interval 249-312 (PAPRLPQDPC…PDPCGSNCAP (64 aa)) is 4 X 16 AA approximate tandem repeats of [PA]-A-P-G-L-P-[PQR]-[DG]-P-C-G-P-D-C-A-P. 2 repeat units span residues 265–280 (PAPG…DCAP) and 281–296 (AAPS…DCAP). The stretch at 297–312 (PAPGLPPDPCGSNCAP) is one 4; approximate repeat. The segment at 317–336 (RAAALPPQTPPQTRRRRRAK) is disordered. Residues 347–367 (VLPVVVGAFLLCWTPFFVVHI) traverse the membrane as a helical segment. The Extracellular portion of the chain corresponds to 368-382 (TQALCPACSVPPRLV). An intrachain disulfide couples cysteine 372 to cysteine 375. The chain crosses the membrane as a helical span at residues 383–403 (SAVTWLGYVNSALNPVIYTVF). Residues 404-419 (NAEFRNVFRKALRACC) are Cytoplasmic-facing. Residue cysteine 419 is the site of S-palmitoyl cysteine attachment.

This sequence belongs to the G-protein coupled receptor 1 family. Forms homo- and heterooligomers with DRD2. D4.7 allele exhibits higher affinity for homodimers compared to DRD2 heterodimers, while alleles D42. and 4.4 have similar affinities for both. The interaction with DRD2 may modulate agonist-induced downstream signaling. Interacts with CLIC6. Interacts with GPRASP1. May interact with ADORA2A. Interacts with KLHL12. In terms of processing, polyubiquitinated by the BCR(KLHL12) E3 ubiquitin ligase complex: polyubiquitination does not lead to degradation of DRD4 protein. Palmitoylated. Palmitoylation of the C-terminal Cys is important for normal expression at the cell membrane. Highly expressed in retina. Detected at much lower levels in brain, in amygdala, thalamus, hypothalamus, cerebellum and pituitary.

It is found in the cell membrane. With respect to regulation, signaling in response to agonists such as dopamine, epinephrine and norepinephrine is modulated by Na(+); lower Na(+) levels result in higher receptor activity (in vitro). Its function is as follows. Dopamine receptor responsible for neuronal signaling in the mesolimbic system of the brain, an area of the brain that regulates emotion and complex behavior. Activated by dopamine, but also by epinephrine and norepinephrine, and by numerous synthetic agonists and drugs. Agonist binding triggers signaling via G proteins that inhibit adenylyl cyclase. Modulates the circadian rhythm of contrast sensitivity by regulating the rhythmic expression of NPAS2 in the retinal ganglion cells. The sequence is that of D(4) dopamine receptor (DRD4) from Homo sapiens (Human).